The following is a 202-amino-acid chain: ATP-dependent Clp protease proteolytic subunit (202 aa).

The Nucleophile role is filled by S98. H123 is an active-site residue.

This sequence belongs to the peptidase S14 family. As to quaternary structure, fourteen ClpP subunits assemble into 2 heptameric rings which stack back to back to give a disk-like structure with a central cavity, resembling the structure of eukaryotic proteasomes.

It localises to the cytoplasm. The enzyme catalyses Hydrolysis of proteins to small peptides in the presence of ATP and magnesium. alpha-casein is the usual test substrate. In the absence of ATP, only oligopeptides shorter than five residues are hydrolyzed (such as succinyl-Leu-Tyr-|-NHMec, and Leu-Tyr-Leu-|-Tyr-Trp, in which cleavage of the -Tyr-|-Leu- and -Tyr-|-Trp bonds also occurs).. Cleaves peptides in various proteins in a process that requires ATP hydrolysis. Has a chymotrypsin-like activity. Plays a major role in the degradation of misfolded proteins. The protein is ATP-dependent Clp protease proteolytic subunit of Desulfovibrio desulfuricans (strain ATCC 27774 / DSM 6949 / MB).